Consider the following 382-residue polypeptide: Anhydro-N-acetylmuramic acid kinase (382 aa).

G22 to D29 provides a ligand contact to ATP.

This sequence belongs to the anhydro-N-acetylmuramic acid kinase family.

It carries out the reaction 1,6-anhydro-N-acetyl-beta-muramate + ATP + H2O = N-acetyl-D-muramate 6-phosphate + ADP + H(+). The protein operates within amino-sugar metabolism; 1,6-anhydro-N-acetylmuramate degradation. It functions in the pathway cell wall biogenesis; peptidoglycan recycling. Its function is as follows. Catalyzes the specific phosphorylation of 1,6-anhydro-N-acetylmuramic acid (anhMurNAc) with the simultaneous cleavage of the 1,6-anhydro ring, generating MurNAc-6-P. Is required for the utilization of anhMurNAc either imported from the medium or derived from its own cell wall murein, and thus plays a role in cell wall recycling. This is Anhydro-N-acetylmuramic acid kinase from Burkholderia ambifaria (strain ATCC BAA-244 / DSM 16087 / CCUG 44356 / LMG 19182 / AMMD) (Burkholderia cepacia (strain AMMD)).